The chain runs to 413 residues: Serine hydroxymethyltransferase (413 aa).

(6S)-5,6,7,8-tetrahydrofolate is bound by residues leucine 119 and 123 to 125 (GHL). Lysine 228 bears the N6-(pyridoxal phosphate)lysine mark. 351 to 353 (SPF) serves as a coordination point for (6S)-5,6,7,8-tetrahydrofolate.

This sequence belongs to the SHMT family. Homodimer. The cofactor is pyridoxal 5'-phosphate.

The protein resides in the cytoplasm. The enzyme catalyses (6R)-5,10-methylene-5,6,7,8-tetrahydrofolate + glycine + H2O = (6S)-5,6,7,8-tetrahydrofolate + L-serine. Its pathway is one-carbon metabolism; tetrahydrofolate interconversion. It participates in amino-acid biosynthesis; glycine biosynthesis; glycine from L-serine: step 1/1. Functionally, catalyzes the reversible interconversion of serine and glycine with tetrahydrofolate (THF) serving as the one-carbon carrier. This reaction serves as the major source of one-carbon groups required for the biosynthesis of purines, thymidylate, methionine, and other important biomolecules. Also exhibits THF-independent aldolase activity toward beta-hydroxyamino acids, producing glycine and aldehydes, via a retro-aldol mechanism. This Clostridium botulinum (strain 657 / Type Ba4) protein is Serine hydroxymethyltransferase.